Consider the following 140-residue polypeptide: Large-conductance mechanosensitive channel (140 aa).

2 helical membrane-spanning segments follow: residues 11–31 (FAMR…GAFG) and 82–102 (GNFI…FLLV).

Belongs to the MscL family. As to quaternary structure, homopentamer.

Its subcellular location is the cell inner membrane. Channel that opens in response to stretch forces in the membrane lipid bilayer. May participate in the regulation of osmotic pressure changes within the cell. In Parabacteroides distasonis (strain ATCC 8503 / DSM 20701 / CIP 104284 / JCM 5825 / NCTC 11152), this protein is Large-conductance mechanosensitive channel.